A 464-amino-acid chain; its full sequence is Type I restriction enzyme EcoKI specificity subunit (464 aa).

It belongs to the type-I restriction system S methylase family. As to quaternary structure, the type I restriction/modification system is composed of three polypeptides R, M and S. The restriction enzyme has stoichiometry R(2)M(2)S(1). The methyltransferase is composed of M(2)S(1). (Microbial infection) Interacts with Escherichia phage T7 protein Ocr; this interaction leads to the inhibition of the methyltransferase restriction enzyme M.EcoKI composed of M(2)S(1).

In terms of biological role, the specificity (S) subunit of a type I restriction enzyme; this subunit dictates DNA sequence specificity. The M and S subunits together form a methyltransferase (MTase) that methylates A-2 on the top and A-3 on the bottom strand of the sequence 5'-AACN(6)GTGC-3'. In the presence of the R subunit the complex can also act as an endonuclease, binding to the same target sequence but cutting the DNA some distance from this site. Whether the DNA is cut or modified depends on the methylation state of the target sequence. When the target site is unmodified, the DNA is cut. When the target site is hemimethylated, the complex acts as a maintenance MTase modifying the DNA so that both strands become methylated. After locating a non-methylated recognition site, the enzyme complex serves as a molecular motor that translocates DNA in an ATP-dependent manner until a collision occurs that triggers cleavage. This Escherichia coli (strain K12) protein is Type I restriction enzyme EcoKI specificity subunit.